Here is a 536-residue protein sequence, read N- to C-terminus: MFS-type efflux pump MFS1 (536 aa).

The next 3 helical transmembrane spans lie at 30–50 (VTGL…LLVA), 80–100 (YLLT…FFPV), and 102–122 (WVFL…GAAP). Residue Asn-123 is glycosylated (N-linked (GlcNAc...) asparagine). 3 helical membrane-spanning segments follow: residues 133–153 (VAGI…AYSI), 163–183 (GAIG…GGAF), and 191–211 (WCFY…LIFL). Asn-221 carries an N-linked (GlcNAc...) asparagine glycan. 8 helical membrane passes run 234–254 (IGTA…QWGG), 264–284 (IIAL…FQIR), 306–326 (FFLF…PIWF), 342–362 (IPMV…VTAI), 366–386 (APLY…LTTF), 400–420 (IIFG…AQAV), 426–446 (VAVG…LFVS), and 503–523 (TWYV…GMEW).

It belongs to the major facilitator superfamily. TCR/Tet family.

The protein resides in the cell membrane. Its function is as follows. MFS-type efflux pump involved in the modulation susceptibility to azoles, including fluconazole, itraconazole, miconazole and voriconazole. Also confers increased resistance chloramphenicol and thiamphenicol, suggesting that it acts as a pleiotropic drug transporter with a broad substrate spectrum. Finally, increases the tolerance to cycloheximide when expressed in S.cerevisiae, but not in dermatophyte species. In Arthroderma benhamiae (strain ATCC MYA-4681 / CBS 112371) (Trichophyton mentagrophytes), this protein is MFS-type efflux pump MFS1.